A 310-amino-acid polypeptide reads, in one-letter code: Delta(1)-pyrroline-2-carboxylate reductase 1 (310 aa).

Belongs to the ornithine cyclodeaminase/mu-crystallin family.

It carries out the reaction L-proline + NAD(+) = 1-pyrroline-2-carboxylate + NADH + H(+). The catalysed reaction is L-proline + NADP(+) = 1-pyrroline-2-carboxylate + NADPH + H(+). Functionally, catalyzes the reduction of Delta(1)-pyrroline-2-carboxylate (Pyr2C) to L-proline, using NADPH as the electron donor. May be involved in a degradation pathway that converts trans-3-hydroxy-L-proline (t3LHyp) to L-proline. This Burkholderia multivorans (strain ATCC 17616 / 249) protein is Delta(1)-pyrroline-2-carboxylate reductase 1.